The chain runs to 86 residues: Putative protein adenylyltransferase MJ1215 (86 aa).

The GSX(10)DXD motif motif lies at 35-49 (GSYARGEQKETSDID). The Mg(2+) site is built by aspartate 47, aspartate 49, and aspartate 79.

This sequence belongs to the MntA antitoxin family. In terms of assembly, probably forms a complex with cognate toxin MJ1216. It depends on Mg(2+) as a cofactor.

It carries out the reaction L-tyrosyl-[protein] + ATP = O-(5'-adenylyl)-L-tyrosyl-[protein] + diphosphate. It catalyses the reaction O-(5'-adenylyl)-L-tyrosyl-[protein] + ATP = O-[5'-(adenylyl-(5'-&gt;3')-adenylyl)]-L-tyrosyl-[protein] + diphosphate. Probable antitoxin component of a putative type VII toxin-antitoxin (TA) system. Neutralizes cognate toxic MJ1216 by di-AMPylation. The chain is Putative protein adenylyltransferase MJ1215 from Methanocaldococcus jannaschii (strain ATCC 43067 / DSM 2661 / JAL-1 / JCM 10045 / NBRC 100440) (Methanococcus jannaschii).